The chain runs to 307 residues: Major pollen allergen Lol p 5a (307 aa).

The N-terminal stretch at 1-25 (MAVQKYTVALFLAVALVAGPAASYA) is a signal peptide.

Belongs to the Poa p IX/Phl p VI allergen family. In terms of tissue distribution, pollen, starch granules.

This Lolium perenne (Perennial ryegrass) protein is Major pollen allergen Lol p 5a (LOLPIB).